The sequence spans 150 residues: Cytochrome c oxidase subunit 5A, mitochondrial (150 aa).

A mitochondrion-targeting transit peptide spans 1 to 41 (MLGAALRRCAVAATTWAGPRGHLHSARTPGPAAAIQSVRCY). Residues 2–17 (LGAALRRCAVAATTWA) carry the SIFI-degron motif. N6-acetyllysine is present on residues lysine 87 and lysine 113. Residue threonine 141 is modified to Phosphothreonine.

It belongs to the cytochrome c oxidase subunit 5A family. As to quaternary structure, component of the cytochrome c oxidase (complex IV, CIV), a multisubunit enzyme composed of 14 subunits. The complex is composed of a catalytic core of 3 subunits MT-CO1, MT-CO2 and MT-CO3, encoded in the mitochondrial DNA, and 11 supernumerary subunits COX4I, COX5A, COX5B, COX6A, COX6B, COX6C, COX7A, COX7B, COX7C, COX8 and NDUFA4, which are encoded in the nuclear genome. The complex exists as a monomer or a dimer and forms supercomplexes (SCs) in the inner mitochondrial membrane with NADH-ubiquinone oxidoreductase (complex I, CI) and ubiquinol-cytochrome c oxidoreductase (cytochrome b-c1 complex, complex III, CIII), resulting in different assemblies (supercomplex SCI(1)III(2)IV(1) and megacomplex MCI(2)III(2)IV(2)). Interacts with AFG1L. Interacts with RAB5IF. In response to mitochondrial stress, the precursor protein is ubiquitinated by the SIFI complex in the cytoplasm before mitochondrial import, leading to its degradation. Within the SIFI complex, UBR4 initiates ubiquitin chain that are further elongated or branched by KCMF1.

The protein localises to the mitochondrion inner membrane. It participates in energy metabolism; oxidative phosphorylation. Functionally, component of the cytochrome c oxidase, the last enzyme in the mitochondrial electron transport chain which drives oxidative phosphorylation. The respiratory chain contains 3 multisubunit complexes succinate dehydrogenase (complex II, CII), ubiquinol-cytochrome c oxidoreductase (cytochrome b-c1 complex, complex III, CIII) and cytochrome c oxidase (complex IV, CIV), that cooperate to transfer electrons derived from NADH and succinate to molecular oxygen, creating an electrochemical gradient over the inner membrane that drives transmembrane transport and the ATP synthase. Cytochrome c oxidase is the component of the respiratory chain that catalyzes the reduction of oxygen to water. Electrons originating from reduced cytochrome c in the intermembrane space (IMS) are transferred via the dinuclear copper A center (CU(A)) of subunit 2 and heme A of subunit 1 to the active site in subunit 1, a binuclear center (BNC) formed by heme A3 and copper B (CU(B)). The BNC reduces molecular oxygen to 2 water molecules using 4 electrons from cytochrome c in the IMS and 4 protons from the mitochondrial matrix. This is Cytochrome c oxidase subunit 5A, mitochondrial (COX5A) from Symphalangus syndactylus (Siamang).